An 898-amino-acid polypeptide reads, in one-letter code: Protein translocase subunit SecA (898 aa).

Residues glutamine 87, 105–109 (GEGKT), and aspartate 512 contribute to the ATP site. Residues 855 to 865 (MQYQNNEGTSS) are compositionally biased toward polar residues. The interval 855 to 898 (MQYQNNEGTSSLHEKSEHKIGRNESCPCGSGKKYKHCHGSKAKY) is disordered. The span at 866 to 876 (LHEKSEHKIGR) shows a compositional bias: basic and acidic residues. Residues cysteine 880, cysteine 882, cysteine 891, and histidine 892 each coordinate Zn(2+). The span at 886-898 (KKYKHCHGSKAKY) shows a compositional bias: basic residues.

Belongs to the SecA family. Monomer and homodimer. Part of the essential Sec protein translocation apparatus which comprises SecA, SecYEG and auxiliary proteins SecDF-YajC and YidC. Zn(2+) is required as a cofactor.

The protein localises to the cell inner membrane. It localises to the cytoplasm. The catalysed reaction is ATP + H2O + cellular proteinSide 1 = ADP + phosphate + cellular proteinSide 2.. Functionally, part of the Sec protein translocase complex. Interacts with the SecYEG preprotein conducting channel. Has a central role in coupling the hydrolysis of ATP to the transfer of proteins into and across the cell membrane, serving both as a receptor for the preprotein-SecB complex and as an ATP-driven molecular motor driving the stepwise translocation of polypeptide chains across the membrane. This Histophilus somni (strain 129Pt) (Haemophilus somnus) protein is Protein translocase subunit SecA.